A 459-amino-acid chain; its full sequence is Interleukin-7 receptor subunit alpha (459 aa).

An N-terminal signal peptide occupies residues 1–20; sequence MMALGRAFAIVFCLIQAVSG. The Extracellular portion of the chain corresponds to 21-239; the sequence is ESGNAQDGDL…PEPKNQGGWD (219 aa). Cys42 and Cys57 form a disulfide bridge. N-linked (GlcNAc...) asparagine glycosylation occurs at Asn60. Disulfide bonds link Cys74-Cys82 and Cys108-Cys118. Asn115 and Asn177 each carry an N-linked (GlcNAc...) asparagine glycan. The 102-residue stretch at 131-232 folds into the Fibronectin type-III domain; sequence APSDLKVVYR…PSSTFETPEP (102 aa). Positions 218-222 match the WSXWS motif motif; it reads WSEWS. Residues 240–264 traverse the membrane as a helical segment; it reads PVLPSVTILSLFSVFLLVILAHVLW. The Cytoplasmic segment spans residues 265–459; sequence KKRIKPVVWP…VTMSSFYQNK (195 aa). The Box 1 motif signature appears at 272–280; the sequence is VWPSLPDHK. At Thr282 the chain carries Phosphothreonine; by PKC. Disordered stretches follow at residues 337–365 and 378–413; these read TQGHRAAVHSANRSPETSVSPPETVRRES and NAPPLLSSRSPDYRDGDRNRPPVYQDLLPNSGNTNV. Positions 347 to 357 are enriched in polar residues; the sequence is ANRSPETSVSP. Residues 388 to 397 show a composition bias toward basic and acidic residues; sequence PDYRDGDRNR.

It belongs to the type I cytokine receptor family. Type 4 subfamily. In terms of assembly, the IL7 receptor is a heterodimer of IL7R and IL2RG. The TSLP receptor is a heterodimer of CRLF2 and IL7R. Interacts with CD53. In terms of processing, N-glycosylated IL-7Ralpha binds IL7 300-fold more tightly than the unglycosylated form. Ubiquitinated by MARCHF8; leading to lysosomal degradation. Spleen, thymus and fetal liver.

Its subcellular location is the membrane. In terms of biological role, receptor for interleukin-7. Also acts as a receptor for thymic stromal lymphopoietin (TSLP). The protein is Interleukin-7 receptor subunit alpha (Il7r) of Mus musculus (Mouse).